A 149-amino-acid chain; its full sequence is Transcriptional repressor NrdR (149 aa).

Residues 3 to 34 (CPFCSENDTKVIDSRLVADGHQVRRRRQCLAC) fold into a zinc finger. The 91-residue stretch at 49–139 (PKVIKSNGNR…VYRSFEDIRE (91 aa)) folds into the ATP-cone domain.

The protein belongs to the NrdR family. Zn(2+) serves as cofactor.

Functionally, negatively regulates transcription of bacterial ribonucleotide reductase nrd genes and operons by binding to NrdR-boxes. In Vibrio vulnificus (strain YJ016), this protein is Transcriptional repressor NrdR.